The following is a 106-amino-acid chain: Chaperone modulatory protein CbpM (106 aa).

The protein belongs to the CbpM family.

In terms of biological role, interacts with CbpA and inhibits both the DnaJ-like co-chaperone activity and the DNA binding activity of CbpA. Together with CbpA, modulates the activity of the DnaK chaperone system. Does not inhibit the co-chaperone activity of DnaJ. The polypeptide is Chaperone modulatory protein CbpM (Coxiella burnetii (strain CbuK_Q154) (Coxiella burnetii (strain Q154))).